We begin with the raw amino-acid sequence, 219 residues long: Transmembrane emp24 domain-containing protein 10 (219 aa).

Residues 1–31 (MSGLFGPLSRPGPLPSAWLFLLLLGPSSVLG) form the signal peptide. The interval 1-142 (MSGLFGPLSR…KNYEEIAKVE (142 aa)) is required for interaction with STX17. At 32 to 185 (ISFHLPVNSR…RDTNESTNTR (154 aa)) the chain is on the lumenal side. The region spanning 41-193 (RKCLREEIHK…TRVLYFSIFS (153 aa)) is the GOLD domain. The tract at residues 147-178 (LEVELRRLEDLSESIVNDFAYMKKREEEMRDT) is required for TMED10 and TMED2 cis-Golgi network localization. Arginine 171 and arginine 176 each carry dimethylated arginine. A glycan (N-linked (GlcNAc...) asparagine) is linked at asparagine 179. A helical transmembrane segment spans residues 186-206 (VLYFSIFSMFCLIGLATWQVF). An interaction with COPG1 region spans residues 204–219 (QVFYLRRFFKAKKLIE). The Cytoplasmic segment spans residues 207–219 (YLRRFFKAKKLIE). Positions 207–219 (YLRRFFKAKKLIE) are interaction with ARF1 and IL1B. The short motif at 211–212 (FF) is the COPII vesicle coat-binding element. A COPI vesicle coat-binding motif is present at residues 211–219 (FFKAKKLIE).

It belongs to the EMP24/GP25L family. In terms of assembly, predominantly dimeric and to a lesser extent monomeric in the ER. Monomer and dimer in ERGIC and cis-Golgi network. Forms homooligomer (via GOLD domain); the assembly is promoted by direct binding with leaderless cargos and may form a protein channel that facilitates cargo entry into the ERGIC. Forms heterooligomeric complexes with other members of the p24 family such as TMED2, TMED7 and TMED9. Interacts (via GOLD domain) with TMED2 (via GOLD domain); the complex is required for export of TMED10 from the ER to the cis-Golgi network; the complex is proposed to be involved in cis-Golgi network dynamics and / or biogenesis. Associates with the COPI vesicle coat subunits (coatomer). Tetramerization of the cytoplasmic domain at the Golgi membrane in vitro; the complex is proposed to interact with COPI coatomer and induce budding of the vesicles. Interacts with COPG1; the interaction involves TMED10 homodimer. Interacts with ARF1 (GDP-bound); the interaction probably involves a TMED10 oligomer. Interacts with SEC23A, SEC24B, SEC24C and SEC24D components of the coat protein complex II/COPII, indicative of an association of TMED10 with the COPII vesicle coat. Interacts with CD59. Interacts with MPPE1/PGAP5; the complex might recruit and sort GPI-anchored proteins to the ER-exit site, or the interaction might lead to recycling of PGAP5 between the ER and the Golgi. Interacts with F2LR1/PAR2. Interacts with KDELR2/ERD2; the interaction is disrupted by KDELR2 ligand. Found in a complex composed at least of SURF4, TMED2 and TMED10. Associates with the presenilin-dependent gamma-secretase complex. Interacts with STX17; the interaction is direct. Interacts with IL-1; the interaction is direct. Interacts with RAB21 (active GTP-bound form); the interaction is indirect and regulates TMED10 abundance and localization at the Golgi.

It localises to the endoplasmic reticulum membrane. It is found in the endoplasmic reticulum-Golgi intermediate compartment membrane. The protein localises to the golgi apparatus membrane. The protein resides in the golgi apparatus. Its subcellular location is the cis-Golgi network membrane. It localises to the trans-Golgi network membrane. It is found in the cytoplasmic vesicle. The protein localises to the secretory vesicle membrane. The protein resides in the cell membrane. Its subcellular location is the melanosome. Its function is as follows. Cargo receptor involved in protein vesicular trafficking and quality control in the endoplasmic reticulum (ER) and Golgi. The p24 protein family is a group of transmembrane proteins that bind coat protein complex I/COPI and coat protein complex II/COPII involved in vesicular trafficking between the membranes. Acts at the lumenal side for incorporation of secretory cargo molecules into transport vesicles and involved in vesicle coat formation at the cytoplasmic side. Mainly functions in the early secretory pathway and cycles between the ER, ER-Golgi intermediate compartment (ERGIC) and Golgi, mediating cargo transport through COPI and COPII-coated vesicles. In COPII vesicle-mediated anterograde transport, involved in the transport of GPI-anchored proteins by acting together with TMED2 as their cargo receptor; the function specifically implies SEC24C and SEC24D of the COPII vesicle coat and lipid raft-like microdomains of the ER. Recognizes GPI anchors structural remodeled in the ER by the GPI inositol-deacylase/PGAP1 and the metallophosphoesterase MPPE1/PGAP5. In COPI vesicle-mediated retrograde transport, involved in the biogenesis of COPI vesicles and vesicle coat recruitment. Involved in trafficking of amyloid beta A4 protein and soluble APP-beta release (independent from the modulation of gamma-secretase activity). Involved in the KDELR2-mediated retrograde transport of the toxin A subunit (CTX-A-K63)together with COPI and the COOH terminus of KDELR2. On Golgi membranes, acts as a primary receptor for ARF1-GDP, a GTP-binding protein involved in COPI-vesicle formation. Increases coatomer-dependent GTPase-activating activity of ARFGAP2 which mediates the hydrolysis of ARF1-bound GTP and therefore modulates protein trafficking from the Golgi apparatus. Involved in the exocytic trafficking of G protein-coupled receptors F2LR1/PAR2 (trypsin and tryspin-like enzyme receptor), OPRM1 (opioid receptor) and P2RY4 (UTD and UDP receptor) from the Golgi to the plasma membrane, thus contributing to receptor resensitization. In addition to its cargo receptor activity, may also act as a protein channel after oligomerization, facilitating the post-translational entry of leaderless cytoplasmic cargo into the ERGIC. Involved in the translocation into ERGIC, the vesicle entry and the secretion of leaderless cargos (lacking the secretion signal sequence), including the mature form of interleukin 1/IL-1 family members, the alpha-crystallin B chain HSPB5, the carbohydrate-binding proteins galectin-1/LGALS1 and galectin-3/LGALS3, the microtubule-associated protein Tau/MAPT, and the annexin A1/ANXA1; the translocation process is dependent on cargo protein unfolding and enhanced by chaperones HSP90AB1 and HSP90B1/GRP9. Could also associates with the presenilin-dependent gamma-secretase complex in order to regulate gamma-cleavages of the amyloid beta A4 protein to yield amyloid-beta 40/Abeta40. This chain is Transmembrane emp24 domain-containing protein 10, found in Mus musculus (Mouse).